The primary structure comprises 521 residues: Histidine--tRNA ligase (521 aa).

L-histidine is bound by residues 137-139 (DLT), R164, Q180, D184, R338, and 342-343 (YY).

Belongs to the class-II aminoacyl-tRNA synthetase family.

The catalysed reaction is tRNA(His) + L-histidine + ATP = L-histidyl-tRNA(His) + AMP + diphosphate + H(+). Involved in protein synthesis. Catalyzes the specific attachment of an amino acid to its cognate tRNA in a 2 step reaction: the amino acid (AA) is first activated by ATP to form AA-AMP and then transferred to the acceptor end of the tRNA. Required for germ cell development. In Caenorhabditis elegans, this protein is Histidine--tRNA ligase.